The following is a 30-amino-acid chain: Ribosome-inactivating protein momorcochin-S (30 aa).

It belongs to the ribosome-inactivating protein family. Type 1 RIP subfamily. Glycosylated.

It catalyses the reaction Endohydrolysis of the N-glycosidic bond at one specific adenosine on the 28S rRNA.. Its function is as follows. Inactivates eukaryotic 60S ribosomal subunits. The chain is Ribosome-inactivating protein momorcochin-S from Momordica cochinchinensis (Spiny bitter cucumber).